We begin with the raw amino-acid sequence, 75 residues long: Large ribosomal subunit protein bL31 (75 aa).

Zn(2+)-binding residues include C16, C18, C38, and C41.

It belongs to the bacterial ribosomal protein bL31 family. Type A subfamily. As to quaternary structure, part of the 50S ribosomal subunit. The cofactor is Zn(2+).

Its function is as follows. Binds the 23S rRNA. In Mycolicibacterium smegmatis (strain ATCC 700084 / mc(2)155) (Mycobacterium smegmatis), this protein is Large ribosomal subunit protein bL31.